Consider the following 957-residue polypeptide: Retinoblastoma-related protein 1 (957 aa).

Residues 369–569 form a domain A region; sequence TPVSTAMTTA…EKGSSMYNSL (201 aa). Positions 369-808 are pocket; it reads TPVSTAMTTA…NEVFIPTVKP (440 aa). Positions 570 to 677 are spacer; it reads IVARPTLSAE…PAAGGETCAE (108 aa). A domain B region spans residues 678-808; it reads TGIGVFLSKI…NEVFIPTVKP (131 aa). The segment at 814 to 854 is disordered; it reads GPGTSPNRNNEPKSGGDAASFPESPRLSRFPNLPDMSPKKV.

It belongs to the retinoblastoma protein (RB) family.

It localises to the nucleus. Its function is as follows. Regulator of biological processes that recruits a histone deacetylase to control gene transcription. May play a role in the entry into mitosis, negatively regulating the cell proliferation. Formation of stable complexes with geminiviridae replication-associated proteins may create a cellular environment which favors viral DNA replication. This chain is Retinoblastoma-related protein 1 (RBR1), found in Triticum aestivum (Wheat).